The chain runs to 310 residues: Transcription initiation factor IIB (310 aa).

Residues 9-41 (EKETKCPECGSDDLRGDYERAEIVCGKCGLVID) form a TFIIB-type zinc finger. Zn(2+) contacts are provided by cysteine 14, cysteine 17, cysteine 33, and cysteine 36. Repeat copies occupy residues 127–210 (SELD…TREL) and 221–302 (DYVP…ELTE).

Belongs to the TFIIB family.

In terms of biological role, stabilizes TBP binding to an archaeal box-A promoter. Also responsible for recruiting RNA polymerase II to the pre-initiation complex (DNA-TBP-TFIIB). The chain is Transcription initiation factor IIB from Methanothermobacter thermautotrophicus (strain ATCC 29096 / DSM 1053 / JCM 10044 / NBRC 100330 / Delta H) (Methanobacterium thermoautotrophicum).